Here is a 425-residue protein sequence, read N- to C-terminus: MLDVKLLRANFEEIKQKLAHRGEDLSDFDQFEELDTKRRELIVKVEELKGKRNEVSQQVAALKREKKDADHLIKEMREVGEDIKKLDEELRTVESSLDKIMLSIPNIPHESVPVGETEDDNVEVRKWGELPEFSFEPKPHWDIADQLDILDFERAGKVTGSRFVFYKGLGARLERALYNFMLDLHVDEYGYTEVIPPYMVNRASMTGTGQLPKFEEDAFKIREEDYFLIPTAEVPITNLHRDEILSADELPINYAAFSACFRSEAGSAGRDTRGLIRQHQFNKVELVKFVKPEDSYEELEKLTNQAEKVLQLLELPYRVMSMCTGDLGFTAAKKYDIEVWIPSQNTYREISSCSNFEAFQARRANIRFRREAKGKPEHVHTLNGSGLAVGRTVAALLENYQQEDGSVIIPKALRPYMGNRDVIQP.

231-233 provides a ligand contact to L-serine; it reads TAE. ATP is bound at residue 262-264; sequence RSE. Position 285 (glutamate 285) interacts with L-serine. ATP is bound at residue 349–352; it reads EISS. Serine 385 contributes to the L-serine binding site.

The protein belongs to the class-II aminoacyl-tRNA synthetase family. Type-1 seryl-tRNA synthetase subfamily. As to quaternary structure, homodimer. The tRNA molecule binds across the dimer.

It localises to the cytoplasm. The catalysed reaction is tRNA(Ser) + L-serine + ATP = L-seryl-tRNA(Ser) + AMP + diphosphate + H(+). It catalyses the reaction tRNA(Sec) + L-serine + ATP = L-seryl-tRNA(Sec) + AMP + diphosphate + H(+). It functions in the pathway aminoacyl-tRNA biosynthesis; selenocysteinyl-tRNA(Sec) biosynthesis; L-seryl-tRNA(Sec) from L-serine and tRNA(Sec): step 1/1. Its function is as follows. Catalyzes the attachment of serine to tRNA(Ser). Is also able to aminoacylate tRNA(Sec) with serine, to form the misacylated tRNA L-seryl-tRNA(Sec), which will be further converted into selenocysteinyl-tRNA(Sec). This chain is Serine--tRNA ligase, found in Bacillus licheniformis (strain ATCC 14580 / DSM 13 / JCM 2505 / CCUG 7422 / NBRC 12200 / NCIMB 9375 / NCTC 10341 / NRRL NRS-1264 / Gibson 46).